The chain runs to 438 residues: MTTYHFIGIKGTGMSALAQILHDSGEKVQGSDFEKRFFTQEALEQKNITILPFSKENIKEDYTIIAGNAFSDDHIEIQKAKELGCKFYRYHEFLGEWLKQYTSIAVTGAHGKTSTTGLLSHVLKSAYPISYLIGDGTGNGHVDSEYFVFEACEYRRHFLKYEPDYAIMTNIDFDHPDYFTSLDDVVDAFQSMADRVKKCIVACGDDEQLQGIHTKVPVIYYGFNDSNDFQAQNVVETANGTEFDVFVRNTYYDHFIIPTYGNHTVLNALAVIAICHYEGISVEHMKQLDTFEGVKRRFTEKEIGSQIVIDDYAHHPKEISVTIESARKKYPNKNVVAIFQPHTFTRTKTFLKEFADSLNEADNVYLCDIFKSAREDSGQLTINDLQKLIPNSQLLSLKETEVLQEFKDSVLIFMGAGDIQKFQAAYEETTTKSTNFQD.

108–114 (GAHGKTS) is a binding site for ATP.

The protein belongs to the MurCDEF family.

It is found in the cytoplasm. The enzyme catalyses UDP-N-acetyl-alpha-D-muramate + L-alanine + ATP = UDP-N-acetyl-alpha-D-muramoyl-L-alanine + ADP + phosphate + H(+). The protein operates within cell wall biogenesis; peptidoglycan biosynthesis. Cell wall formation. This chain is UDP-N-acetylmuramate--L-alanine ligase, found in Oceanobacillus iheyensis (strain DSM 14371 / CIP 107618 / JCM 11309 / KCTC 3954 / HTE831).